Reading from the N-terminus, the 114-residue chain is Transcription initiation factor IIB (114 aa).

2 repeat units span residues 1 to 17 and 28 to 109.

The protein belongs to the TFIIB family.

Functionally, stabilizes TBP binding to an archaeal box-A promoter. Also responsible for recruiting RNA polymerase II to the pre-initiation complex (DNA-TBP-TFIIB). This chain is Transcription initiation factor IIB (tfb), found in Haloarcula vallismortis (Halobacterium vallismortis).